We begin with the raw amino-acid sequence, 201 residues long: dITP/XTP pyrophosphatase (201 aa).

Residue 8–13 (TTNENK) coordinates substrate. Catalysis depends on D68, which acts as the Proton acceptor. D68 contacts Mg(2+). Residues S69, 155 to 158 (FGYD), K177, and 182 to 183 (HR) each bind substrate.

The protein belongs to the HAM1 NTPase family. As to quaternary structure, homodimer. Requires Mg(2+) as cofactor.

The enzyme catalyses XTP + H2O = XMP + diphosphate + H(+). It catalyses the reaction dITP + H2O = dIMP + diphosphate + H(+). The catalysed reaction is ITP + H2O = IMP + diphosphate + H(+). Its function is as follows. Pyrophosphatase that catalyzes the hydrolysis of nucleoside triphosphates to their monophosphate derivatives, with a high preference for the non-canonical purine nucleotides XTP (xanthosine triphosphate), dITP (deoxyinosine triphosphate) and ITP. Seems to function as a house-cleaning enzyme that removes non-canonical purine nucleotides from the nucleotide pool, thus preventing their incorporation into DNA/RNA and avoiding chromosomal lesions. In Borrelia garinii subsp. bavariensis (strain ATCC BAA-2496 / DSM 23469 / PBi) (Borreliella bavariensis), this protein is dITP/XTP pyrophosphatase.